Reading from the N-terminus, the 644-residue chain is Chaperone protein DnaK (644 aa).

T199 carries the post-translational modification Phosphothreonine; by autocatalysis. The disordered stretch occupies residues 605–644; sequence KKSSEGQAAQGQTQSQESTKPAEEGVVDAEFEEVKEEDKK. Positions 609–623 are enriched in polar residues; the sequence is EGQAAQGQTQSQEST. Positions 629–644 are enriched in acidic residues; that stretch reads GVVDAEFEEVKEEDKK.

It belongs to the heat shock protein 70 family.

In terms of biological role, acts as a chaperone. This is Chaperone protein DnaK from Legionella pneumophila subsp. pneumophila (strain Philadelphia 1 / ATCC 33152 / DSM 7513).